Consider the following 245-residue polypeptide: Protein-L-isoaspartate O-methyltransferase 1 (245 aa).

The active site involves S76.

It belongs to the methyltransferase superfamily. L-isoaspartyl/D-aspartyl protein methyltransferase family.

Its subcellular location is the cytoplasm. It catalyses the reaction [protein]-L-isoaspartate + S-adenosyl-L-methionine = [protein]-L-isoaspartate alpha-methyl ester + S-adenosyl-L-homocysteine. Its function is as follows. Catalyzes the methyl esterification of L-isoaspartyl residues in peptides and proteins that result from spontaneous decomposition of normal L-aspartyl and L-asparaginyl residues. It plays a role in the repair and/or degradation of damaged proteins. This is Protein-L-isoaspartate O-methyltransferase 1 from Rhodopseudomonas palustris (strain HaA2).